Reading from the N-terminus, the 296-residue chain is Elongation factor Ts (296 aa).

An involved in Mg(2+) ion dislocation from EF-Tu region spans residues 81-84 (TDFV).

Belongs to the EF-Ts family.

The protein localises to the cytoplasm. Associates with the EF-Tu.GDP complex and induces the exchange of GDP to GTP. It remains bound to the aminoacyl-tRNA.EF-Tu.GTP complex up to the GTP hydrolysis stage on the ribosome. The polypeptide is Elongation factor Ts (Ruthia magnifica subsp. Calyptogena magnifica).